The primary structure comprises 1096 residues: Phospholipase D zeta 1 (1096 aa).

Residue Ala2 is modified to N-acetylalanine. The region spanning 50-204 (PKAVIVSVSR…REVCRFLEVS (155 aa)) is the PX domain. The disordered stretch occupies residues 131-152 (VQDEDADEVPLHQDESAKNRDV). Over residues 139-151 (VPLHQDESAKNRD) the composition is skewed to basic and acidic residues. The 109-residue stretch at 234–342 (DDSNRCCGCC…WVASINDAAL (109 aa)) folds into the PH domain. The PLD phosphodiesterase 1 domain occupies 477-504 (YLWSHHEKLVIVDNQVCFIGGLDLCFGR). Catalysis depends on residues His482, Lys484, and Asp489. The segment covering 607 to 632 (GRQEESDIESKKEEDSIRGIRRDDSF) has biased composition (basic and acidic residues). The interval 607 to 691 (GRQEESDIES…DGDTPMRGFV (85 aa)) is disordered. The region spanning 892 to 919 (SQVYVHSKIMIVDDRAALIGSANINDRS) is the PLD phosphodiesterase 2 domain. Active-site residues include His897, Lys899, and Asp904.

Belongs to the phospholipase D family. PXPH-PLD subfamily. It depends on Does not require Ca(2+) or any other cation for activity. as a cofactor. In terms of tissue distribution, expressed in inflorescences, flowers, siliques, stems, leaves, and roots. Highest expression in roots.

It localises to the cytoplasmic vesicle. It carries out the reaction a 1,2-diacyl-sn-glycero-3-phosphocholine + H2O = a 1,2-diacyl-sn-glycero-3-phosphate + choline + H(+). Its activity is regulated as follows. Calcium-independent and PIP2-dependent. Hydrolyzes glycerol-phospholipids at the terminal phosphodiesteric bond to generate phosphatidic acids (PA). Phosphatidylcholine-selective. Regulates root-hair morphogenesis. Contributes to the supply of inorganic phosphorus for cell metabolism and diacylglycerol moieties for galactolipid synthesis in phosphorus-starved roots. Involved in root elongation during phosphate limitation. This Arabidopsis thaliana (Mouse-ear cress) protein is Phospholipase D zeta 1.